Reading from the N-terminus, the 237-residue chain is tRNA(His) guanylyltransferase (237 aa).

The Mg(2+) site is built by Asp29, Gly30, and Asp77. Residues 29 to 34 (DGKHFH) and 76 to 77 (SD) each bind GTP.

The protein belongs to the tRNA(His) guanylyltransferase family. Mg(2+) serves as cofactor.

It catalyses the reaction a 5'-end ribonucleotide-tRNA(His) + GTP + ATP + H2O = a 5'-end phospho-guanosine-ribonucleotide-tRNA(His) + AMP + 2 diphosphate + H(+). Its function is as follows. Adds a GMP to the 5'-end of tRNA(His) after transcription and RNase P cleavage. In Eremothecium gossypii (strain ATCC 10895 / CBS 109.51 / FGSC 9923 / NRRL Y-1056) (Yeast), this protein is tRNA(His) guanylyltransferase (THG1).